The sequence spans 326 residues: Lipoyl synthase (326 aa).

[4Fe-4S] cluster contacts are provided by Cys-56, Cys-61, Cys-67, Cys-82, Cys-86, Cys-89, and Ser-298. Positions 68 to 287 constitute a Radical SAM core domain; it reads WEDREATFLI…KDEADAIGYS (220 aa).

Belongs to the radical SAM superfamily. Lipoyl synthase family. [4Fe-4S] cluster serves as cofactor.

The protein resides in the cytoplasm. It catalyses the reaction [[Fe-S] cluster scaffold protein carrying a second [4Fe-4S](2+) cluster] + N(6)-octanoyl-L-lysyl-[protein] + 2 oxidized [2Fe-2S]-[ferredoxin] + 2 S-adenosyl-L-methionine + 4 H(+) = [[Fe-S] cluster scaffold protein] + N(6)-[(R)-dihydrolipoyl]-L-lysyl-[protein] + 4 Fe(3+) + 2 hydrogen sulfide + 2 5'-deoxyadenosine + 2 L-methionine + 2 reduced [2Fe-2S]-[ferredoxin]. The protein operates within protein modification; protein lipoylation via endogenous pathway; protein N(6)-(lipoyl)lysine from octanoyl-[acyl-carrier-protein]: step 2/2. Functionally, catalyzes the radical-mediated insertion of two sulfur atoms into the C-6 and C-8 positions of the octanoyl moiety bound to the lipoyl domains of lipoate-dependent enzymes, thereby converting the octanoylated domains into lipoylated derivatives. This is Lipoyl synthase from Streptomyces griseus subsp. griseus (strain JCM 4626 / CBS 651.72 / NBRC 13350 / KCC S-0626 / ISP 5235).